A 544-amino-acid chain; its full sequence is Serine/threonine-protein kinase PAK 1 (544 aa).

Residues 1–77 form a disordered region; it reads MSNNGLDIQD…KEKERPEISL (77 aa). Ser2 carries the post-translational modification N-acetylserine. A Phosphoserine; by PKB and autocatalysis modification is found at Ser21. Residues 68–77 are compositionally biased toward basic and acidic residues; sequence KEKERPEISL. The tract at residues 70 to 140 is autoregulatory region; it reads KERPEISLPS…YNSKKTSNSQ (71 aa). The region spanning 75-88 is the CRIB domain; sequence ISLPSDFEHTIHVG. Residues 75-105 form a GTPase-binding region; the sequence is ISLPSDFEHTIHVGFDAVTGEFTGMPEQWAR. Thr84 is subject to Phosphothreonine; by OXSR1. Ser115 is subject to Phosphoserine. Phosphotyrosine occurs at positions 131 and 142. Residues Ser144 and Ser149 each carry the phosphoserine; by autocatalysis modification. Tyr153 is subject to Phosphotyrosine; by JAK2. Residues 161 to 193 form a disordered region; sequence VKAVSETPAVPPVSEDEDDDDDGTPPPVIAPRP. Residue Ser174 is modified to Phosphoserine. The segment covering 174-183 has biased composition (acidic residues); sequence SEDEDDDDDG. Thr184 bears the Phosphothreonine mark. Position 198 is a phosphoserine; by autocatalysis (Ser198). Tyr200 carries the post-translational modification Phosphotyrosine; by JAK2. Ser203 carries the post-translational modification Phosphoserine; by autocatalysis. Thr211 and Thr218 each carry phosphothreonine. A disordered region spans residues 212 to 250; the sequence is PTRDVATSPISPTENNTTPPDALTRNTEKQKKKPKMSDE. Residues Ser219 and Ser222 each carry the phosphoserine modification. Residues 219–230 are compositionally biased toward polar residues; sequence SPISPTENNTTP. A phosphothreonine mark is found at Thr224, Thr228, and Thr229. In terms of domain architecture, Protein kinase spans 269 to 520; sequence YTRFEKIGQG…AKELLQHQFL (252 aa). ATP is bound at residue 275-283; that stretch reads IGQGASGTV. The residue at position 284 (Tyr284) is a Phosphotyrosine; by JAK2. Lys298 contacts ATP. Catalysis depends on Asp388, which acts as the Proton acceptor. Thr422 bears the Phosphothreonine; by autocatalysis, BRSK2 and PDPK1 mark.

It belongs to the protein kinase superfamily. STE Ser/Thr protein kinase family. STE20 subfamily. In terms of assembly, homodimer in its autoinhibited state. Active as monomer. Interacts with GIT1. Component of cytoplasmic complexes, which also contains PXN, ARHGEF7 and GIT1. Interacts with NISCH. Interacts with DVL1; mediates the formation of a DVL1, MUSK and PAK1 ternary complex involved in AChR clustering. Binds to the caspase-cleaved p110 isoform of CDC2L1 and CDC2L2, p110C, but not the full-length proteins. Interacts with ARHGEF7. Interacts tightly with GTP-bound but not GDP-bound CDC42/P21 and RAC1. Probably found in a ternary complex composed of DSCAM, PAK1 and RAC1. Interacts with DSCAM (via cytoplasmic domain); the interaction is direct and enhanced in presence of RAC1. Interacts with SCRIB. Interacts with PDPK1. Interacts (via kinase domain) with RAF1. Interacts with NCK1 and NCK2. Interacts with TBCB. Interacts with BRSK2. Interacts with SNAI1. Interacts with CIB1 (via N-terminal region); the interaction is direct, promotes PAK1 activity and occurs in a calcium-dependent manner. Interacts with INPP5K. Interacts with gamma-tubulin. Interacts with RHOU; the interaction promotes PAK1 activation. The cofactor is Mg(2+). In terms of processing, autophosphorylated in trans, meaning that in a dimer, one kinase molecule phosphorylates the other one. Activated by autophosphorylation at Thr-422 in response to a conformation change, triggered by interaction with GTP-bound CDC42 or RAC1. Activated by phosphorylation at Thr-422 by BRSK2 and by PDPK1. Phosphorylated by JAK2 in response to PRL; this increases PAK1 kinase activity. Phosphorylated at Ser-21 by PKB/AKT; this reduces interaction with NCK1 and association with focal adhesion sites. Upon DNA damage, phosphorylated at Thr-211 and translocates to the nucleoplasm. Phosphorylated at tyrosine residues, which can be enhanced by NTN1.

Its subcellular location is the cytoplasm. It localises to the cell junction. The protein localises to the focal adhesion. The protein resides in the cell projection. It is found in the lamellipodium. Its subcellular location is the cell membrane. It localises to the ruffle membrane. The protein localises to the invadopodium. The protein resides in the nucleus. It is found in the nucleoplasm. Its subcellular location is the chromosome. It localises to the cytoskeleton. The protein localises to the microtubule organizing center. The protein resides in the centrosome. The enzyme catalyses L-seryl-[protein] + ATP = O-phospho-L-seryl-[protein] + ADP + H(+). It carries out the reaction L-threonyl-[protein] + ATP = O-phospho-L-threonyl-[protein] + ADP + H(+). Phosphorylation of Thr-84 by OXSR1 inhibits activation. Activated by binding small G proteins. Binding of GTP-bound CDC42 or RAC1 to the autoregulatory region releases monomers from the autoinhibited dimer, and enables activation by phosphorylation of Thr-422. Protein kinase involved in intracellular signaling pathways downstream of integrins and receptor-type kinases that plays an important role in cytoskeleton dynamics, in cell adhesion, migration, proliferation, apoptosis, mitosis, and in vesicle-mediated transport processes. Can directly phosphorylate BAD and protects cells against apoptosis. Activated by interaction with CDC42 and RAC1. Functions as a GTPase effector that links the Rho-related GTPases CDC42 and RAC1 to the JNK MAP kinase pathway. Phosphorylates and activates MAP2K1, and thereby mediates activation of downstream MAP kinases. Involved in the reorganization of the actin cytoskeleton, actin stress fibers and of focal adhesion complexes. Phosphorylates the tubulin chaperone TBCB and thereby plays a role in the regulation of microtubule biogenesis and organization of the tubulin cytoskeleton. Plays a role in the regulation of insulin secretion in response to elevated glucose levels. Part of a ternary complex that contains PAK1, DVL1 and MUSK that is important for MUSK-dependent regulation of AChR clustering during the formation of the neuromuscular junction (NMJ). Activity is inhibited in cells undergoing apoptosis, potentially due to binding of CDC2L1 and CDC2L2. Phosphorylates MYL9/MLC2. Phosphorylates RAF1 at 'Ser-338' and 'Ser-339' resulting in: activation of RAF1, stimulation of RAF1 translocation to mitochondria, phosphorylation of BAD by RAF1, and RAF1 binding to BCL2. Phosphorylates SNAI1 at 'Ser-246' promoting its transcriptional repressor activity by increasing its accumulation in the nucleus. In podocytes, promotes NR3C2 nuclear localization. Required for atypical chemokine receptor ACKR2-induced phosphorylation of LIMK1 and cofilin (CFL1) and for the up-regulation of ACKR2 from endosomal compartment to cell membrane, increasing its efficiency in chemokine uptake and degradation. In synapses, seems to mediate the regulation of F-actin cluster formation performed by SHANK3, maybe through CFL1 phosphorylation and inactivation. Plays a role in RUFY3-mediated facilitating gastric cancer cells migration and invasion. In response to DNA damage, phosphorylates MORC2 which activates its ATPase activity and facilitates chromatin remodeling. In neurons, plays a crucial role in regulating GABA(A) receptor synaptic stability and hence GABAergic inhibitory synaptic transmission through its role in F-actin stabilization. In hippocampal neurons, necessary for the formation of dendritic spines and excitatory synapses; this function is dependent on kinase activity and may be exerted by the regulation of actomyosin contractility through the phosphorylation of myosin II regulatory light chain (MLC). Along with GIT1, positively regulates microtubule nucleation during interphase. Phosphorylates FXR1, promoting its localization to stress granules and activity. Phosphorylates ILK on 'Thr-173' and 'Ser-246', promoting nuclear export of ILK. The chain is Serine/threonine-protein kinase PAK 1 from Bos taurus (Bovine).